The sequence spans 505 residues: Trans-cinnamate 4-monooxygenase (505 aa).

A helical membrane pass occupies residues 3-23 (LLLIEKTLVALFAAIIGAILI). (E)-cinnamate is bound by residues 213-218 (RSRLAQ) and Ala-306. A heme-binding site is contributed by Cys-447.

It belongs to the cytochrome P450 family. It depends on heme as a cofactor.

It is found in the membrane. It carries out the reaction (E)-cinnamate + reduced [NADPH--hemoprotein reductase] + O2 = (E)-4-coumarate + oxidized [NADPH--hemoprotein reductase] + H2O + H(+). It functions in the pathway phenylpropanoid metabolism; trans-4-coumarate biosynthesis; trans-4-coumarate from trans-cinnamate: step 1/1. Inactivated by piperonylic acid. Catalyzes the first oxidative step of the phenylpropanoid pathway in higher plants by transforming trans-cinnamate into p-coumarate. The compounds formed by this pathway are essential components for lignification, pollination, and defense against ultraviolet light, predators and pathogens. Can also use 2-naphthoic acid as substrate. The polypeptide is Trans-cinnamate 4-monooxygenase (Helianthus tuberosus (Jerusalem artichoke)).